The following is a 938-amino-acid chain: Isoleucine--tRNA ligase (938 aa).

Residues Pro-58–His-68 carry the 'HIGH' region motif. Glu-561 contacts L-isoleucyl-5'-AMP. The 'KMSKS' region motif lies at Lys-602–Ser-606. Lys-605 is a binding site for ATP. Cys-901, Cys-904, Cys-921, and Cys-924 together coordinate Zn(2+).

Belongs to the class-I aminoacyl-tRNA synthetase family. IleS type 1 subfamily. As to quaternary structure, monomer. The cofactor is Zn(2+).

The protein resides in the cytoplasm. It carries out the reaction tRNA(Ile) + L-isoleucine + ATP = L-isoleucyl-tRNA(Ile) + AMP + diphosphate. Its function is as follows. Catalyzes the attachment of isoleucine to tRNA(Ile). As IleRS can inadvertently accommodate and process structurally similar amino acids such as valine, to avoid such errors it has two additional distinct tRNA(Ile)-dependent editing activities. One activity is designated as 'pretransfer' editing and involves the hydrolysis of activated Val-AMP. The other activity is designated 'posttransfer' editing and involves deacylation of mischarged Val-tRNA(Ile). The chain is Isoleucine--tRNA ligase from Serratia proteamaculans (strain 568).